The following is a 323-amino-acid chain: MIEFSNFYQLIAKNHLSHWLETLPAQVAAWQREQLHGKFKQWSNAVEFLPEMTPYKLDLLHSVTAESEEPLSDGQLLRLDKLMRNLMPWRKGPFSLYGLNIDTEWRSDWKWDRVLPHLSDLTGRTILDVGCGSGYHMWRMIGAGAHLAVGIDPMQLFLCQFEAVRKLLGNDQRAHLLPLGIEQLPALAAFDTVFSMGVLYHRRSPLEHLWQLKDQLVNGGELVLETLVIEGDENAVLVPGDRYAQMRNVYFIPSALALKNWLEKCGFVDVRIADVCVTSTEEQRRTEWLTTESLAEFLDPNDSTKTIEGYPAPMRAVLIATKP.

Carboxy-S-adenosyl-L-methionine contacts are provided by residues Lys91, Trp105, Lys110, Gly130, 181 to 182, Met196, Tyr200, and Arg315; that span reads IE.

The protein belongs to the class I-like SAM-binding methyltransferase superfamily. CmoB family. As to quaternary structure, homotetramer.

It carries out the reaction carboxy-S-adenosyl-L-methionine + 5-hydroxyuridine(34) in tRNA = 5-carboxymethoxyuridine(34) in tRNA + S-adenosyl-L-homocysteine + H(+). Functionally, catalyzes carboxymethyl transfer from carboxy-S-adenosyl-L-methionine (Cx-SAM) to 5-hydroxyuridine (ho5U) to form 5-carboxymethoxyuridine (cmo5U) at position 34 in tRNAs. The polypeptide is tRNA U34 carboxymethyltransferase (Enterobacter sp. (strain 638)).